The chain runs to 134 residues: Alkaline proteinase inhibitor (134 aa).

A signal peptide spans 1–26 (MVFAAWYLKFAFFVALAFSIIGGSMA). Cys-50 and Cys-73 are joined by a disulfide.

It belongs to the protease inhibitor I38 family.

The protein resides in the periplasm. Functionally, inhibitor of the alkaline protease. The sequence is that of Alkaline proteinase inhibitor (inh) from Photorhabdus luminescens (Xenorhabdus luminescens).